Here is a 105-residue protein sequence, read N- to C-terminus: Pyrimidine/purine nucleoside phosphorylase (105 aa).

This sequence belongs to the nucleoside phosphorylase PpnP family.

It catalyses the reaction a purine D-ribonucleoside + phosphate = a purine nucleobase + alpha-D-ribose 1-phosphate. The enzyme catalyses adenosine + phosphate = alpha-D-ribose 1-phosphate + adenine. It carries out the reaction cytidine + phosphate = cytosine + alpha-D-ribose 1-phosphate. The catalysed reaction is guanosine + phosphate = alpha-D-ribose 1-phosphate + guanine. It catalyses the reaction inosine + phosphate = alpha-D-ribose 1-phosphate + hypoxanthine. The enzyme catalyses thymidine + phosphate = 2-deoxy-alpha-D-ribose 1-phosphate + thymine. It carries out the reaction uridine + phosphate = alpha-D-ribose 1-phosphate + uracil. The catalysed reaction is xanthosine + phosphate = alpha-D-ribose 1-phosphate + xanthine. Its function is as follows. Catalyzes the phosphorolysis of diverse nucleosides, yielding D-ribose 1-phosphate and the respective free bases. Can use uridine, adenosine, guanosine, cytidine, thymidine, inosine and xanthosine as substrates. Also catalyzes the reverse reactions. The sequence is that of Pyrimidine/purine nucleoside phosphorylase from Paracidovorax citrulli (strain AAC00-1) (Acidovorax citrulli).